The sequence spans 171 residues: MNKRNKVKHLNRNKGHRDALINNMITSLFKYERIESTQAKLKVVRSHAEKLITRAKKNLVTDLKPEVQLHNKREVMKRIKDREVVVKLFEDIAKRFETKNGGYTRVLKLVNRISDNSEVGILELTSRKERSTLLKERIEKREIQTKAREEKRATRKSNSAPVNKETTSKKK.

Positions 140-152 (KREIQTKAREEKR) are enriched in basic and acidic residues. The tract at residues 140-171 (KREIQTKAREEKRATRKSNSAPVNKETTSKKK) is disordered. The segment covering 156–165 (KSNSAPVNKE) has biased composition (polar residues).

This sequence belongs to the bacterial ribosomal protein bL17 family. In terms of assembly, part of the 50S ribosomal subunit. Contacts protein L32.

This Leptospira interrogans serogroup Icterohaemorrhagiae serovar Lai (strain 56601) protein is Large ribosomal subunit protein bL17.